Consider the following 244-residue polypeptide: uncharacterized protein (244 aa).

Residues 5 to 244 form the GP-PDE domain; that stretch reads QLLLAHRGYS…ANKKFEIKIN (240 aa).

This sequence to glycerophosphoryl diester phosphodiesterases (EC 3.1.4.46). The protein to M.genitalium MG385.

This is an uncharacterized protein from Mycoplasma genitalium (strain ATCC 33530 / DSM 19775 / NCTC 10195 / G37) (Mycoplasmoides genitalium).